A 101-amino-acid polypeptide reads, in one-letter code: Protein RnfH (101 aa).

It belongs to the UPF0125 (RnfH) family.

The chain is Protein RnfH from Pseudomonas aeruginosa (strain LESB58).